Reading from the N-terminus, the 111-residue chain is Protein RnfH (111 aa).

The disordered stretch occupies residues R88–A111. Over residues K94 to K105 the composition is skewed to basic and acidic residues.

This sequence belongs to the UPF0125 (RnfH) family.

In Cupriavidus pinatubonensis (strain JMP 134 / LMG 1197) (Cupriavidus necator (strain JMP 134)), this protein is Protein RnfH.